We begin with the raw amino-acid sequence, 344 residues long: Probable dual-specificity RNA methyltransferase RlmN (344 aa).

The active-site Proton acceptor is glutamate 90. Positions 96-326 (YKYGNAICIS…VTIRRELGSS (231 aa)) constitute a Radical SAM core domain. A disulfide bridge links cysteine 103 with cysteine 331. Cysteine 110, cysteine 114, and cysteine 117 together coordinate [4Fe-4S] cluster. Residues 157 to 158 (GE), serine 189, 212 to 214 (SLH), and asparagine 288 contribute to the S-adenosyl-L-methionine site. The S-methylcysteine intermediate role is filled by cysteine 331.

This sequence belongs to the radical SAM superfamily. RlmN family. The cofactor is [4Fe-4S] cluster.

It is found in the cytoplasm. It catalyses the reaction adenosine(2503) in 23S rRNA + 2 reduced [2Fe-2S]-[ferredoxin] + 2 S-adenosyl-L-methionine = 2-methyladenosine(2503) in 23S rRNA + 5'-deoxyadenosine + L-methionine + 2 oxidized [2Fe-2S]-[ferredoxin] + S-adenosyl-L-homocysteine. The catalysed reaction is adenosine(37) in tRNA + 2 reduced [2Fe-2S]-[ferredoxin] + 2 S-adenosyl-L-methionine = 2-methyladenosine(37) in tRNA + 5'-deoxyadenosine + L-methionine + 2 oxidized [2Fe-2S]-[ferredoxin] + S-adenosyl-L-homocysteine. In terms of biological role, specifically methylates position 2 of adenine 2503 in 23S rRNA and position 2 of adenine 37 in tRNAs. This is Probable dual-specificity RNA methyltransferase RlmN from Caldicellulosiruptor saccharolyticus (strain ATCC 43494 / DSM 8903 / Tp8T 6331).